We begin with the raw amino-acid sequence, 107 residues long: Pathogenesis-related protein PR-4 (107 aa).

The region spanning Gln1–Asp107 is the Barwin domain. Cystine bridges form between Cys14–Cys46, Cys35–Cys69, and Cys49–Cys105.

As to expression, preferentially expressed in the tissue surrounding the abscission zone of fruitlets.

The protein resides in the secreted. It is found in the cell wall. In terms of biological role, may be involved in protecting plant tissues from pathogen infection. In Prunus persica (Peach), this protein is Pathogenesis-related protein PR-4.